A 466-amino-acid chain; its full sequence is Alpha-galacturonidase (466 aa).

11–78 (VKIAYIGGGS…GKWNYETANT (68 aa)) provides a ligand contact to NAD(+). Asn-157 is a binding site for substrate. Residue Cys-179 coordinates Mn(2+). Catalysis depends on His-180, which acts as the Proton donor. A Mn(2+)-binding site is contributed by His-216.

Belongs to the glycosyl hydrolase 4 family. In terms of assembly, homotetramer. It depends on NAD(+) as a cofactor. The cofactor is Mn(2+).

It catalyses the reaction [(1-&gt;4)-alpha-D-galacturonosyl](n) + H2O = alpha-D-galacturonate + [(1-&gt;4)-alpha-D-galacturonosyl](n-1). Its function is as follows. Alpha-galacturonidase able to catalyze the hydrolysis of the chromogenic substrate p-nitrophenyl-alpha-D-galacturonic acid (pNPalphaGalUA). It is probable that alpha-1,4-di-galacturonate (GalUA(2)) is the naturally occurring substrate. The sequence is that of Alpha-galacturonidase from Lachnoclostridium phytofermentans (strain ATCC 700394 / DSM 18823 / ISDg) (Clostridium phytofermentans).